The chain runs to 221 residues: Orotidine 5'-phosphate decarboxylase (221 aa).

Residues Asp12, Lys34, 60–69 (DFKVADIPNT), Ser117, 170–180 (PGVGAQGGKAS), Gly193, and Arg194 contribute to the substrate site. Lys62 (proton donor) is an active-site residue.

Belongs to the OMP decarboxylase family. Type 1 subfamily. As to quaternary structure, homodimer.

The enzyme catalyses orotidine 5'-phosphate + H(+) = UMP + CO2. It functions in the pathway pyrimidine metabolism; UMP biosynthesis via de novo pathway; UMP from orotate: step 2/2. In terms of biological role, catalyzes the decarboxylation of orotidine 5'-monophosphate (OMP) to uridine 5'-monophosphate (UMP). This is Orotidine 5'-phosphate decarboxylase from Methanosarcina acetivorans (strain ATCC 35395 / DSM 2834 / JCM 12185 / C2A).